The sequence spans 790 residues: Mitochondrial intermediate peptidase (790 aa).

A mitochondrion-targeting transit peptide spans 1–29 (MLKRLARNNSSPWICSRCLQQSQRQRRFN). Residue H570 coordinates Zn(2+). E571 is a catalytic residue. Zn(2+) contacts are provided by H574 and H577.

This sequence belongs to the peptidase M3 family. Zn(2+) serves as cofactor.

Its subcellular location is the mitochondrion matrix. It carries out the reaction Release of an N-terminal octapeptide as second stage of processing of some proteins imported into the mitochondrion.. Its function is as follows. Cleaves proteins, imported into the mitochondrion, to their mature size. While most mitochondrial precursor proteins are processed to the mature form in one step by mitochondrial processing peptidase (MPP), the sequential cleavage by MIP of an octapeptide after initial processing by MPP is a required step for a subgroup of nuclear-encoded precursor proteins destined for the matrix or the inner membrane. This chain is Mitochondrial intermediate peptidase (OCT1), found in Phaeosphaeria nodorum (strain SN15 / ATCC MYA-4574 / FGSC 10173) (Glume blotch fungus).